A 527-amino-acid polypeptide reads, in one-letter code: ATP synthase subunit alpha (527 aa).

Position 172–179 (172–179 (GDRQTGKT)) interacts with ATP.

This sequence belongs to the ATPase alpha/beta chains family. In terms of assembly, F-type ATPases have 2 components, CF(1) - the catalytic core - and CF(0) - the membrane proton channel. CF(1) has five subunits: alpha(3), beta(3), gamma(1), delta(1), epsilon(1). CF(0) has three main subunits: a(1), b(2) and c(9-12). The alpha and beta chains form an alternating ring which encloses part of the gamma chain. CF(1) is attached to CF(0) by a central stalk formed by the gamma and epsilon chains, while a peripheral stalk is formed by the delta and b chains.

The protein resides in the cell inner membrane. The catalysed reaction is ATP + H2O + 4 H(+)(in) = ADP + phosphate + 5 H(+)(out). Produces ATP from ADP in the presence of a proton gradient across the membrane. The alpha chain is a regulatory subunit. This chain is ATP synthase subunit alpha, found in Bacteroides fragilis (strain ATCC 25285 / DSM 2151 / CCUG 4856 / JCM 11019 / LMG 10263 / NCTC 9343 / Onslow / VPI 2553 / EN-2).